Here is a 131-residue protein sequence, read N- to C-terminus: Small ribosomal subunit protein uS8 (131 aa).

The protein belongs to the universal ribosomal protein uS8 family. Part of the 30S ribosomal subunit. Contacts proteins S5 and S12.

Its function is as follows. One of the primary rRNA binding proteins, it binds directly to 16S rRNA central domain where it helps coordinate assembly of the platform of the 30S subunit. This chain is Small ribosomal subunit protein uS8, found in Wolinella succinogenes (strain ATCC 29543 / DSM 1740 / CCUG 13145 / JCM 31913 / LMG 7466 / NCTC 11488 / FDC 602W) (Vibrio succinogenes).